The sequence spans 340 residues: Protein FAM50A-A (340 aa).

2 disordered regions span residues 1 to 22 (MAQYKGAASEAGRAMQLMKKRE) and 123 to 178 (NLEE…EEEN). Positions 124 to 146 (LEEDEECEDEEGEEEESDKEDPP) are enriched in acidic residues. Positions 169 to 178 (PDRDREEEEN) are enriched in basic and acidic residues.

It localises to the nucleus. In terms of biological role, probably involved in the regulation of pre-mRNA splicing. The sequence is that of Protein FAM50A-A (fam50a-a) from Xenopus laevis (African clawed frog).